A 1056-amino-acid chain; its full sequence is ISWI chromatin-remodeling complex ATPase CHR11 (1056 aa).

Residues methionine 1–alanine 10 show a composition bias toward low complexity. Disordered stretches follow at residues methionine 1 to glutamate 80 and lysine 133 to asparagine 175. 2 stretches are compositionally biased toward acidic residues: residues phenylalanine 11–glutamate 32 and proline 60–lysine 73. Positions serine 12–serine 105 form a coiled coil. Residues lysine 141–serine 151 are compositionally biased toward basic residues. Positions glutamate 155–glycine 169 are enriched in acidic residues. Residues isoleucine 201 to glutamate 366 form the Helicase ATP-binding domain. Aspartate 214–threonine 221 provides a ligand contact to ATP. Positions aspartate 317–histidine 320 match the DEAH box motif. The Helicase C-terminal domain maps to leucine 494–alanine 645. Disordered regions lie at residues tryptophan 738–proline 774 and isoleucine 814–glutamate 833. Residues aspartate 815–glutamate 833 show a composition bias toward acidic residues. SANT domains follow at residues glutamate 840–lysine 892 and glutamine 941–isoleucine 1002. A disordered region spans residues glutamate 1011–arginine 1056. Residues threonine 1047–arginine 1056 show a composition bias toward basic residues.

It belongs to the SNF2/RAD54 helicase family. ISWI subfamily. Interacts with RLT1 and RLT2. Interacts (via C-terminus) with RLT1 (via the DDT domain), RLT2 (via the DDT domain), PTM (via the DDT domain) and DDR4 (via the DDT domain). Binds to FGT1. As to expression, highly expressed in growing tissues such as inflorescence and flower meristems, young leaves and floral organs. Expressed in roots, rosette and cauline leaves, stems, flowers, inflorescences and siliques.

The protein resides in the nucleus. Functionally, possesses intrinsic ATP-dependent nucleosome-remodeling activity. Constitutes the catalytic subunit of several complexes capable of forming ordered nucleosome arrays on chromatin. Involved in the formation of nucleosome distribution patterns. Involved in nuclear proliferation during megagametogenesis and cell expansion in the sporophyte. Required for the maintenance of the plant vegetative phase. In association with RLT1 or RLT2 may prevent the early activation of the vegetative-to-reproductive transition by regulating key genes that contribute to flower timing, such as FT, SEP1, SEP3, AGL8/FUL, SOC1 and FLC. Necessary to acquire heat stress (HS) memory. In Arabidopsis thaliana (Mouse-ear cress), this protein is ISWI chromatin-remodeling complex ATPase CHR11.